Consider the following 229-residue polypeptide: Ribulose-phosphate 3-epimerase (229 aa).

A substrate-binding site is contributed by Ser13. Residues His36, Asp38, and His69 each contribute to the a divalent metal cation site. The active-site Proton acceptor is Asp38. Substrate contacts are provided by residues His69, 145-148 (GFGG), 178-180 (DGG), and 200-201 (GS). A divalent metal cation is bound at residue Asp178. Catalysis depends on Asp178, which acts as the Proton donor.

The protein belongs to the ribulose-phosphate 3-epimerase family. The cofactor is a divalent metal cation.

The catalysed reaction is D-ribulose 5-phosphate = D-xylulose 5-phosphate. Its pathway is carbohydrate degradation. Functionally, catalyzes the reversible epimerization of D-ribulose 5-phosphate to D-xylulose 5-phosphate. This chain is Ribulose-phosphate 3-epimerase, found in Mycobacterium bovis (strain ATCC BAA-935 / AF2122/97).